Here is a 676-residue protein sequence, read N- to C-terminus: Protein timeless (676 aa).

The interval 77–108 (VNTLQKLLNLWFEASLSESSEDNESNTSPPKK) is necessary for normal circadian rhythm. 2 disordered regions span residues 94-145 (ESSE…CDER) and 346-398 (PESI…LVKR). Low complexity-rich tracts occupy residues 101–129 (SNTS…SDNG) and 360–369 (QGKPQHQKPP). Positions 388–398 (KELRRKKLVKR) match the Nuclear localization signal motif.

It belongs to the timeless family. Forms a heterodimer with period (PER); the complex then translocates into the nucleus. In terms of processing, phosphorylated with a circadian rhythmicity.

The protein resides in the nucleus. Its subcellular location is the cytoplasm. The protein localises to the perinuclear region. Functionally, required for the production of circadian rhythms. The biological cycle depends on the rhythmic formation and nuclear localization of the TIM-PER complex. Light induces the degradation of TIM, which promotes elimination of PER. Nuclear activity of the heterodimer coordinatively regulates PER and TIM transcription through a negative feedback loop. Behaves as a negative element in circadian transcriptional loop. Does not appear to bind DNA, suggesting indirect transcriptional inhibition. The polypeptide is Protein timeless (tim) (Drosophila hydei (Fruit fly)).